Here is an 88-residue protein sequence, read N- to C-terminus: Outer membrane protein H.8 (88 aa).

The N-terminal stretch at 1–17 is a signal peptide; it reads MKKSLFAAALLSLALAA. Cys18 carries N-palmitoyl cysteine lipidation. The S-diacylglycerol cysteine moiety is linked to residue Cys18. Tandem repeats lie at residues 23 to 27, 28 to 32, 33 to 37, 38 to 42, 43 to 47, 48 to 52, 53 to 57, 58 to 62, 63 to 67, 68 to 72, 73 to 77, 78 to 82, and 83 to 87. The interval 23-87 is 13 X 5 AA tandem repeats of [AS]-[AT]-E-A-[PAS]; the sequence is AAEAPAAEAS…AAEAPAAEAA (65 aa). The tract at residues 23–88 is disordered; that stretch reads AAEAPAAEAS…AEAPAAEAAK (66 aa). The segment covering 25–88 has biased composition (low complexity); it reads EAPAAEASST…AEAPAAEAAK (64 aa).

The protein localises to the cell outer membrane. This is Outer membrane protein H.8 from Neisseria gonorrhoeae (strain ATCC 700825 / FA 1090).